The primary structure comprises 263 residues: 4'-phosphopantetheinyl transferase pptA (263 aa).

The protein belongs to the P-Pant transferase superfamily.

The catalysed reaction is apo-[ACP] + CoA = holo-[ACP] + adenosine 3',5'-bisphosphate + H(+). Transfers the 4'-phosphopantetheine moiety from coenzyme A to a Ser of an acyl-carrier-protein. Activates the peptidyl carrier protein (PCP) domains of surfactin synthas. This is 4'-phosphopantetheinyl transferase pptA (pptA) from Paxillus involutus (Naked brimcap).